The chain runs to 324 residues: Geranylgeranyl pyrophosphate synthase dpmpD (324 aa).

Residues Lys-50, Arg-53, and His-82 each coordinate isopentenyl diphosphate. Mg(2+)-binding residues include Asp-89 and Asp-93. Residue Arg-98 coordinates dimethylallyl diphosphate. Arg-99 contacts isopentenyl diphosphate. Residues Lys-176, Thr-177, and Gln-210 each coordinate dimethylallyl diphosphate. Asp-213 contributes to the Mg(2+) binding site. Dimethylallyl diphosphate is bound by residues Asn-217, Lys-227, and Lys-237.

Belongs to the FPP/GGPP synthase family. Mg(2+) serves as cofactor.

The enzyme catalyses isopentenyl diphosphate + dimethylallyl diphosphate = (2E)-geranyl diphosphate + diphosphate. It catalyses the reaction isopentenyl diphosphate + (2E)-geranyl diphosphate = (2E,6E)-farnesyl diphosphate + diphosphate. It carries out the reaction isopentenyl diphosphate + (2E,6E)-farnesyl diphosphate = (2E,6E,10E)-geranylgeranyl diphosphate + diphosphate. It participates in secondary metabolite biosynthesis; terpenoid biosynthesis. Its function is as follows. Geranylgeranyl pyrophosphate synthase; part of the gene cluster that mediates the biosynthesis of diterpenoid pyrones. The first step of the pathway is the synthesis of the alpha-pyrone moiety by the polyketide synthase dpmpA via condensation of one acetyl-CoA starter unit with 3 malonyl-CoA units and 2 methylations. The alpha-pyrone is then combined with geranylgeranyl pyrophosphate (GGPP) formed by the GGPP synthase dpmpD through the action of the prenyltransferase dpmpC to yield a linear alpha-pyrone diterpenoid. Subsequent steps in the diterpenoid pyrone biosynthetic pathway involve the decalin core formation, which is initiated by the epoxidation of the C10-C11 olefin by the FAD-dependent oxidoreductase dpmpE, and is followed by a cyclization cascade catalyzed by the terpene cyclase dpmpB. The short chain dehydrogenase/reductase dpmpG then oxidizes the 8S hydroxy group to a ketone and the short chain dehydrogenase/reductase dpmpH reduces the ketone to the 8R hydroxy group to yield higginsianin B. Higginsianin B is further methylated by the methyltransferase dpmpI to produce the intermediate named FDDP B. The cytochrome P450 monooxygenase dpmpJ then oxidizes the C-26 methyl to primary alcohol, producing the final diterpenoid pyrone with a C-26 primary alcohol on the gamma-pyrone moiety named FDDP C. This chain is Geranylgeranyl pyrophosphate synthase dpmpD, found in Macrophomina phaseolina (strain MS6) (Charcoal rot fungus).